The chain runs to 187 residues: Acireductone dioxygenase (187 aa).

Fe(2+) is bound by residues H90, H92, E96, and H135. Ni(2+)-binding residues include H90, H92, E96, and H135.

Belongs to the acireductone dioxygenase (ARD) family. Requires Fe(2+) as cofactor. The cofactor is Ni(2+).

It is found in the cytoplasm. It localises to the nucleus. It carries out the reaction 1,2-dihydroxy-5-(methylsulfanyl)pent-1-en-3-one + O2 = 4-methylsulfanyl-2-oxobutanoate + formate + 2 H(+). It catalyses the reaction 1,2-dihydroxy-5-(methylsulfanyl)pent-1-en-3-one + O2 = 3-(methylsulfanyl)propanoate + CO + formate + 2 H(+). It participates in amino-acid biosynthesis; L-methionine biosynthesis via salvage pathway; L-methionine from S-methyl-5-thio-alpha-D-ribose 1-phosphate: step 5/6. Functionally, catalyzes 2 different reactions between oxygen and the acireductone 1,2-dihydroxy-3-keto-5-methylthiopentene (DHK-MTPene) depending upon the metal bound in the active site. Fe-containing acireductone dioxygenase (Fe-ARD) produces formate and 2-keto-4-methylthiobutyrate (KMTB), the alpha-ketoacid precursor of methionine in the methionine recycle pathway. Ni-containing acireductone dioxygenase (Ni-ARD) produces methylthiopropionate, carbon monoxide and formate, and does not lie on the methionine recycle pathway. This is Acireductone dioxygenase from Drosophila pseudoobscura pseudoobscura (Fruit fly).